The primary structure comprises 311 residues: 4-diphosphocytidyl-2-C-methyl-D-erythritol kinase (311 aa).

Residue lysine 9 is part of the active site. 95-105 contacts ATP; the sequence is PLGAGLAGGST. Residue aspartate 137 is part of the active site.

Belongs to the GHMP kinase family. IspE subfamily.

It carries out the reaction 4-CDP-2-C-methyl-D-erythritol + ATP = 4-CDP-2-C-methyl-D-erythritol 2-phosphate + ADP + H(+). It functions in the pathway isoprenoid biosynthesis; isopentenyl diphosphate biosynthesis via DXP pathway; isopentenyl diphosphate from 1-deoxy-D-xylulose 5-phosphate: step 3/6. Catalyzes the phosphorylation of the position 2 hydroxy group of 4-diphosphocytidyl-2C-methyl-D-erythritol. This chain is 4-diphosphocytidyl-2-C-methyl-D-erythritol kinase, found in Thermosynechococcus vestitus (strain NIES-2133 / IAM M-273 / BP-1).